Reading from the N-terminus, the 185-residue chain is Peroxynitrite isomerase (185 aa).

A disordered region spans residues 1 to 21 (MHHPARELPFPDALRPGARPA). Positions 34–40 (GTWRGTG) match the GXWXGXG motif. His-171 serves as a coordination point for heme b.

The protein belongs to the nitrobindin family. In terms of assembly, homodimer. The cofactor is heme b.

The enzyme catalyses peroxynitrite = nitrate. The protein operates within nitrogen metabolism. In terms of biological role, heme-binding protein able to scavenge peroxynitrite and to protect free L-tyrosine against peroxynitrite-mediated nitration, by acting as a peroxynitrite isomerase that converts peroxynitrite to nitrate. Therefore, this protein likely plays a role in peroxynitrite sensing and in the detoxification of reactive nitrogen and oxygen species (RNS and ROS, respectively). Is able to bind nitric oxide (NO) in vitro, but may act as a sensor of peroxynitrite levels in vivo. In Streptomyces griseus subsp. griseus (strain JCM 4626 / CBS 651.72 / NBRC 13350 / KCC S-0626 / ISP 5235), this protein is Peroxynitrite isomerase.